The sequence spans 499 residues: Alpha-amylase A type-3 (499 aa).

The N-terminal stretch at 1–21 (MMVAWWSLFLYGLQVAAPALA) is a signal peptide. A disulfide bridge connects residues cysteine 51 and cysteine 59. A substrate-binding site is contributed by tryptophan 104. Residue asparagine 142 coordinates Ca(2+). Histidine 143 serves as a coordination point for substrate. A disulfide bridge links cysteine 171 with cysteine 185. 2 residues coordinate Ca(2+): glutamate 183 and aspartate 196. Asparagine 218 carries an N-linked (GlcNAc...) asparagine glycan. Position 225 (arginine 225) interacts with substrate. 3 residues coordinate Ca(2+): aspartate 227, histidine 231, and glutamate 251. Aspartate 227 functions as the Nucleophile in the catalytic mechanism. Substrate is bound at residue 230–231 (KH). Glutamate 251 functions as the Proton donor in the catalytic mechanism. Glycine 255 is a binding site for substrate. Cysteine 261 and cysteine 304 are disulfide-bonded. A substrate-binding site is contributed by arginine 365. Cysteine 461 and cysteine 496 are oxidised to a cystine.

This sequence belongs to the glycosyl hydrolase 13 family. Monomer. Requires Ca(2+) as cofactor.

It localises to the secreted. It catalyses the reaction Endohydrolysis of (1-&gt;4)-alpha-D-glucosidic linkages in polysaccharides containing three or more (1-&gt;4)-alpha-linked D-glucose units.. The protein is Alpha-amylase A type-3 (amy3) of Aspergillus oryzae (strain ATCC 42149 / RIB 40) (Yellow koji mold).